Consider the following 1457-residue polypeptide: DNA-directed RNA polymerase III subunit RPC1 (1457 aa).

7 residues coordinate Zn(2+): Cys67, Cys70, Cys77, His80, Cys107, Cys110, and Cys154. Residues Asp508, Asp510, and Asp512 each coordinate Mg(2+). The interval Pro854 to Glu866 is bridging helix.

This sequence belongs to the RNA polymerase beta' chain family. In terms of assembly, component of the RNA polymerase III (Pol III) complex consisting of 17 subunits.

It is found in the nucleus. The enzyme catalyses RNA(n) + a ribonucleoside 5'-triphosphate = RNA(n+1) + diphosphate. Its function is as follows. DNA-dependent RNA polymerase catalyzes the transcription of DNA into RNA using the four ribonucleoside triphosphates as substrates. Largest and catalytic core component of RNA polymerase III which synthesizes small RNAs, such as 5S rRNA and tRNAs. Forms the polymerase active center together with the second largest subunit. A single-stranded DNA template strand of the promoter is positioned within the central active site cleft of Pol III. A bridging helix emanates from RPC1 and crosses the cleft near the catalytic site and is thought to promote translocation of Pol III by acting as a ratchet that moves the RNA-DNA hybrid through the active site by switching from straight to bent conformations at each step of nucleotide addition. The chain is DNA-directed RNA polymerase III subunit RPC1 (RPC1) from Debaryomyces hansenii (strain ATCC 36239 / CBS 767 / BCRC 21394 / JCM 1990 / NBRC 0083 / IGC 2968) (Yeast).